Here is a 246-residue protein sequence, read N- to C-terminus: B-cell receptor-associated protein 31 (246 aa).

Residues 2–6 (SLQWT) lie on the Lumenal side of the membrane. A helical membrane pass occupies residues 7-27 (AVATFLYAEVFVVLLLCIPFI). The Cytoplasmic portion of the chain corresponds to 28-43 (SPKRWQKIFKSRLVEL). Residues 44–64 (LVSYGNTFFVVLIVILVLLVI) form a helical membrane-spanning segment. Residues 65 to 102 (DAVREIRKYDDVTEKVNLQNNPGAMEHFHMKLFRAQRN) are Lumenal-facing. The helical transmembrane segment at 103–123 (LYIAGFSLLLSFLLRRLVTLI) threads the bilayer. Residues 124-246 (SQQATLLASN…VDGPMDKKEE (123 aa)) are Cytoplasmic-facing. The stretch at 165–237 (GGKLDVGNAE…EEHAKLQAAV (73 aa)) forms a coiled coil. Residues 243–246 (KKEE) carry the Di-lysine motif motif.

Belongs to the BCAP29/BCAP31 family. As to quaternary structure, homodimer and heterodimer with BCAP29. Binds CASP8 (isoform 9) as a complex containing BCAP31, BCAP29, BCL2 and/or BCL2L1. Forms a complex (via C-terminus) with TOMM40 which mediates the translocation of components of the mitochondrial membrane respiratory chain NADH dehydrogenase (Complex I) from the cytosol to the mitochondria; within the complex BCAP31 interacts directly with unprocessed and processed NDUFS4 and NDUFB11. Interacts with VDAC1. Interacts with VAMP3, VAMP1 and membrane IgD immunoglobulins. Interacts with HACD2. Interacts with DNM1L; may form part of a larger protein complex at the endoplasmic reticulum-mitochondrial interface during mitochondrial fission. (Microbial infection) Interacts (via C-terminus) with HRSV membrane protein SH; this interaction is direct. In terms of processing, cleaved by CASP8 and other caspases. Ubiquitous. Highly expressed in neurons and discrete endocrine cells.

The protein resides in the endoplasmic reticulum membrane. It localises to the endoplasmic reticulum-Golgi intermediate compartment membrane. Functionally, functions as a chaperone protein. Is one of the most abundant endoplasmic reticulum (ER) proteins. Plays a role in the export of secreted proteins in the ER, the recognition of abnormally folded protein and their targeting to the ER associated-degradation (ERAD). Also serves as a cargo receptor for the export of transmembrane proteins. Plays a role in the assembly of the mitochondrial membrane respiratory chain NADH dehydrogenase (Complex I) by stimulating the translocation of NDUFS4 and NDUFB11 from the cytosol to the mitochondria via interaction with TOMM40. In response to ER stress, delocalizes from the ER-mitochondria contact sites and binds BCL2. May be involved in CASP8-mediated apoptosis. This is B-cell receptor-associated protein 31 from Homo sapiens (Human).